Reading from the N-terminus, the 85-residue chain is Glutaredoxin 1 (85 aa).

Residues 1–85 form the Glutaredoxin domain; the sequence is MQTVIFGRSG…AAWVKENLDA (85 aa). C11 and C14 are oxidised to a cystine.

It belongs to the glutaredoxin family. In terms of assembly, monomer.

In terms of biological role, the disulfide bond functions as an electron carrier in the glutathione-dependent synthesis of deoxyribonucleotides by the enzyme ribonucleotide reductase. In addition, it is also involved in reducing some disulfides in a coupled system with glutathione reductase. This is Glutaredoxin 1 (grxA) from Shigella flexneri.